The following is a 78-amino-acid chain: Putative DPH3 homolog B (78 aa).

The DPH-type MB domain occupies 4 to 60 (FHDEVEIEDFQYDEDSETYFCPCPCGDNFSITKEELENGEGVAMCPGCSLIIKVIYD). Zn(2+) contacts are provided by cysteine 26, cysteine 28, cysteine 48, and cysteine 51.

Belongs to the DPH3 family.

This is Putative DPH3 homolog B (DPH3P1) from Homo sapiens (Human).